Consider the following 63-residue polypeptide: Beta-defensin 3 (63 aa).

An N-terminal signal peptide occupies residues 1–20 (MRIHYLLFSFLLVLLSPLSA). The propeptide occupies 21 to 22 (FS). Intrachain disulfides connect cysteine 31–cysteine 59, cysteine 38–cysteine 52, and cysteine 42–cysteine 60.

Belongs to the beta-defensin family.

The protein resides in the secreted. In terms of biological role, has bactericidal activity. This Rattus norvegicus (Rat) protein is Beta-defensin 3 (Defb3).